We begin with the raw amino-acid sequence, 191 residues long: HTH-type transcriptional regulator YjdC (191 aa).

In terms of domain architecture, HTH tetR-type spans 1 to 60; sequence MQREDVLGEALKLLELQGIANTTLEMVAERVDYPLDELRRFWPDKEAILYDALRYLSQQI.

This Escherichia coli (strain K12) protein is HTH-type transcriptional regulator YjdC (yjdC).